We begin with the raw amino-acid sequence, 245 residues long: 2,3-bisphosphoglycerate-dependent phosphoglycerate mutase (245 aa).

Substrate contacts are provided by residues 8-15, 21-22, Arg60, 87-90, Lys98, 114-115, and 183-184; these read RHGQSLWN, TG, ERHY, RR, and GN. His9 acts as the Tele-phosphohistidine intermediate in catalysis. Glu87 (proton donor/acceptor) is an active-site residue.

Belongs to the phosphoglycerate mutase family. BPG-dependent PGAM subfamily.

It carries out the reaction (2R)-2-phosphoglycerate = (2R)-3-phosphoglycerate. Its pathway is carbohydrate degradation; glycolysis; pyruvate from D-glyceraldehyde 3-phosphate: step 3/5. Catalyzes the interconversion of 2-phosphoglycerate and 3-phosphoglycerate. The chain is 2,3-bisphosphoglycerate-dependent phosphoglycerate mutase from Bacillus thuringiensis subsp. konkukian (strain 97-27).